Here is a 278-residue protein sequence, read N- to C-terminus: Envelope glycoprotein L (278 aa).

A signal peptide spans methionine 1 to serine 30. The 214-residue stretch at valine 43–glutamate 256 folds into the gL betaherpesvirus-type domain. An intrachain disulfide couples cysteine 154 to cysteine 159.

Belongs to the herpesviridae glycoprotein L (gL) family. Betaherpesvirinae gL subfamily. Interacts with glycoprotein H (gH); this interaction is necessary for the correct processing and cell surface expression of gH. Forms the envelope pentamer complex (PC) composed of gH, gL, UL128, UL130, and UL131A. The pentamer interacts with host NRP2. Forms the envelope trimer complex composed of gH, gL, and gO. The trimer interacts with host PDGFRA.

Its subcellular location is the virion membrane. The protein resides in the host cell membrane. It localises to the host Golgi apparatus. It is found in the host trans-Golgi network. In terms of biological role, the heterodimer glycoprotein H-glycoprotein L is required for the fusion of viral and plasma membranes leading to virus entry into the host cell. Acts as a functional inhibitor of gH and maintains gH in an inhibited form. Upon binding to host integrins, gL dissociates from gH leading to activation of the viral fusion glycoproteins gB and gH. In human cytomegalovirus, forms two distincts complexes to mediate viral entry, a trimer and a pentamer at the surface of the virion envelope. The gH-gL-gO trimer is required for infection in fibroblasts by interacting with host PDGFRA. The gH-gL-UL128-UL130-UL131A pentamer is essential for viral entry in epithelial, endothelial and myeloid cells via interaction with host NRP2. The polypeptide is Envelope glycoprotein L (Human cytomegalovirus (strain AD169) (HHV-5)).